The chain runs to 74 residues: UPF0435 protein BCB4264_A0471 (74 aa).

The protein belongs to the UPF0435 family.

This chain is UPF0435 protein BCB4264_A0471, found in Bacillus cereus (strain B4264).